Here is a 682-residue protein sequence, read N- to C-terminus: Methionine--tRNA ligase (682 aa).

A 'HIGH' region motif is present at residues 15-25 (PYANGAIHLGH). Zn(2+) contacts are provided by Cys-146, Cys-149, Cys-159, and Cys-162. The short motif at 331-335 (KMSKS) is the 'KMSKS' region element. Residue Lys-334 participates in ATP binding. In terms of domain architecture, tRNA-binding spans 580–682 (DFAKLDLRVA…QGVKPGMQVK (103 aa)).

It belongs to the class-I aminoacyl-tRNA synthetase family. MetG type 1 subfamily. As to quaternary structure, homodimer. The cofactor is Zn(2+).

It is found in the cytoplasm. The enzyme catalyses tRNA(Met) + L-methionine + ATP = L-methionyl-tRNA(Met) + AMP + diphosphate. Functionally, is required not only for elongation of protein synthesis but also for the initiation of all mRNA translation through initiator tRNA(fMet) aminoacylation. This is Methionine--tRNA ligase from Pasteurella multocida (strain Pm70).